Consider the following 579-residue polypeptide: MNTAPSRPSPTRRDPYGFGDSRDSRRDRSPIRGSPRREPRDGRNGRDARDSRDIRDPRDLRDHRHSRDLRDHRDSRSVRDVRDVRDLRDFRDLRDSRDFRDQRDPMYDRYRDMRDSRDPMYRREGSYDRYLRMDDYCRRKDDSYFDRYRDSFDGRGPPGPESQSRAKERLKREERRREELYRQYFEEIQRRFDAERPVDCSVIVVNKQTKDYAESVGRKVRDLGMVVDLIFLNTEVSLSQALEDVSRGGSPFAIVITQQHQIHRSCTVNIMFGTPQEHRNMPQADAMVLVARNYERYKNECREKEREEIARQAAKMADEAILQERERGGPEEGVRGGHPPAIQSLINLLADNRYLTAEETDKIINYLRERKERLMRSSTDSLPGPISRQPLGATSGASLKTQPSSQPLQSGQVLPSATPTPSAPPTSQQELQAKILSLFNSGTVTANSSSASPSVAAGNTPNQNFSTAANSQPQQRSQASGNQPPSILGQGGSAQNMGPRPGAPSQGLFGQPSSRLAPASNMTSQRPVSSTGINFDNPSVQKALDTLIQSGPALSHLVSQTTAQMGQPQAPMGSYQRHY.

Residue methionine 1 is modified to N-acetylmethionine. Positions methionine 1 to valine 78 are disordered. Residues methionine 1 to proline 158 form a transcription repression region. Threonine 3 is modified (phosphothreonine). 5 positions are modified to phosphoserine: serine 9, serine 21, serine 24, serine 29, and serine 34. 2 stretches are compositionally biased toward basic and acidic residues: residues threonine 11–aspartate 62 and aspartate 68–valine 78. A phosphoserine mark is found at serine 96, serine 116, serine 126, serine 143, and serine 151. Residues tyrosine 148–glutamate 173 form a disordered region. Over residues serine 164–glutamate 173 the composition is skewed to basic and acidic residues. Threonine 274 bears the Phosphothreonine mark. Residues leucine 345 to leucine 349 carry the LXXLL motif motif. 3 disordered regions span residues methionine 375–glutamine 428, valine 444–asparagine 537, and glutamine 560–tyrosine 579. A Phosphoserine modification is found at serine 378. Residue threonine 379 is modified to Phosphothreonine. Serine 381 is modified (phosphoserine). Residues serine 395 to valine 413 are compositionally biased toward polar residues. Positions alanine 446 to alanine 457 are enriched in low complexity. The interval glycine 458–tyrosine 579 is transcription activation. Composition is skewed to polar residues over residues asparagine 459 to proline 485 and serine 520 to asparagine 537.

In terms of assembly, binds HTATIP2/TIP30. Interacts with YLPM1. Forms a complex with ILF2, ILF3, YLPM1, KHDRBS1, RBMX and PPP1CA. As to expression, widely expressed.

The protein localises to the nucleus. Functionally, nuclear receptor coregulator that can have both coactivator and corepressor functions. Interacts with nuclear receptors for steroids (ESR1 and ESR2) independently of the steroid binding domain (AF-2) of the ESR receptors, and with the orphan nuclear receptor NR1D2. Involved in the coactivation of nuclear steroid receptors (ER) as well as the corepression of MYC in response to 17-beta-estradiol (E2). The protein is Nuclear receptor coactivator 5 (NCOA5) of Homo sapiens (Human).